A 275-amino-acid chain; its full sequence is NAD(P)H dehydrogenase [quinone] 1 (275 aa).

FAD contacts are provided by residues histidine 13, 19 to 20, and glutamine 68; that span reads FN. At serine 83 the chain carries Phosphoserine. 105–108 is a binding site for FAD; the sequence is LQWF. Residue 127 to 129 participates in substrate binding; it reads AYT. Residues 149-152, tyrosine 157, and arginine 202 contribute to the FAD site; that span reads TTGG. The important for apoenzyme conformational stability stretch occupies residues 226–275; the sequence is PSSLFDLNFQAGFLLKKEIEDEQKNNKYGLSVGHHLGKPIPTDNQIKARK. A Glycyl lysine isopeptide (Lys-Gly) (interchain with G-Cter in SUMO2) cross-link involves residue lysine 252.

This sequence belongs to the NAD(P)H dehydrogenase (quinone) family. As to quaternary structure, homodimer. Interacts with PDLIM4 isoform 2; this interaction stabilizes PDLIM4 isoform 2 in response to oxidative stress and protects it from ubiquitin-independent degradation by the core 20S proteasome. Interacts with TP73 (via SAM domain); this interaction is NADH-dependent, stabilizes TP73 in response to oxidative stress and protects it from ubiquitin-independent degradation by the 20S proteasome. Interacts with TP53; this interaction is NADH-dependent, stabilizes TP53 in response to oxidative stress and protects it from ubiquitin-independent degradation by the 20S proteasome. The cofactor is FAD.

The protein resides in the cytoplasm. Its subcellular location is the cytosol. It catalyses the reaction a quinone + NADH + H(+) = a quinol + NAD(+). The enzyme catalyses a quinone + NADPH + H(+) = a quinol + NADP(+). The catalysed reaction is ubiquinone-10 + NADH + H(+) = ubiquinol-10 + NAD(+). It carries out the reaction menadione + NADH + H(+) = menadiol + NAD(+). Its function is as follows. Flavin-containing quinone reductase that catalyzes two-electron reduction of quinones to hydroquinones using either NADH or NADPH as electron donors. In a ping-pong kinetic mechanism, the electrons are sequentially transferred from NAD(P)H to flavin cofactor and then from reduced flavin to the quinone, bypassing the formation of semiquinone and reactive oxygen species. Regulates cellular redox state primarily through quinone detoxification. Reduces components of plasma membrane redox system such as coenzyme Q and vitamin quinones, producing antioxidant hydroquinone forms. In the process may function as superoxide scavenger to prevent hydroquinone oxidation and facilitate excretion. Alternatively, can activate quinones and their derivatives by generating redox reactive hydroquinones with DNA cross-linking antitumor potential. Acts as a gatekeeper of the core 20S proteasome known to degrade proteins with unstructured regions. Upon oxidative stress, interacts with tumor suppressors TP53 and TP73 in a NADH-dependent way and inhibits their ubiquitin-independent degradation by the 20S proteasome. In Cavia porcellus (Guinea pig), this protein is NAD(P)H dehydrogenase [quinone] 1 (NQO1).